A 101-amino-acid polypeptide reads, in one-letter code: NAD(P)H-quinone oxidoreductase subunit 4L (101 aa).

The next 3 helical transmembrane spans lie at 3 to 23 (LQYF…GLVT), 30 to 50 (VLMS…AFSN), and 64 to 84 (IFVI…VLAI).

The protein belongs to the complex I subunit 4L family. In terms of assembly, NDH-1 can be composed of about 15 different subunits; different subcomplexes with different compositions have been identified which probably have different functions.

It localises to the cellular thylakoid membrane. It carries out the reaction a plastoquinone + NADH + (n+1) H(+)(in) = a plastoquinol + NAD(+) + n H(+)(out). The catalysed reaction is a plastoquinone + NADPH + (n+1) H(+)(in) = a plastoquinol + NADP(+) + n H(+)(out). Functionally, NDH-1 shuttles electrons from an unknown electron donor, via FMN and iron-sulfur (Fe-S) centers, to quinones in the respiratory and/or the photosynthetic chain. The immediate electron acceptor for the enzyme in this species is believed to be plastoquinone. Couples the redox reaction to proton translocation, and thus conserves the redox energy in a proton gradient. Cyanobacterial NDH-1 also plays a role in inorganic carbon-concentration. The protein is NAD(P)H-quinone oxidoreductase subunit 4L of Leptolyngbya boryana (Plectonema boryanum).